The chain runs to 517 residues: Maturase K (517 aa).

It belongs to the intron maturase 2 family. MatK subfamily.

It localises to the plastid. The protein localises to the chloroplast. Usually encoded in the trnK tRNA gene intron. Probably assists in splicing its own and other chloroplast group II introns. The protein is Maturase K of Palhinhaea cernua (Nodding clubmoss).